Reading from the N-terminus, the 234-residue chain is Chalcone--flavanone isomerase 1 (234 aa).

Substrate-binding residues include T50, N115, and S192.

Belongs to the chalcone isomerase family.

The enzyme catalyses a chalcone = a flavanone.. It participates in secondary metabolite biosynthesis; flavonoid biosynthesis. In terms of biological role, catalyzes the intramolecular cyclization of bicyclic chalcones into tricyclic (S)-flavanones. Responsible for the isomerization of 4,2',4',6'-tetrahydroxychalcone (also termed chalcone) into naringenin. The sequence is that of Chalcone--flavanone isomerase 1 (CHI1) from Vitis vinifera (Grape).